Consider the following 654-residue polypeptide: Dystrobrevin beta (654 aa).

The residue at position 1 (methionine 1) is an N-acetylmethionine. Residues threonine 11, threonine 69, threonine 179, and threonine 212 each carry the phosphothreonine modification. The ZZ-type zinc finger occupies 238 to 294 (FHPVECSYCHCESMMGFRYRCQQCHNYQLCQNCFWRGHAGGPHSNQHQMKELSSWKS). Zn(2+) contacts are provided by cysteine 243, cysteine 246, cysteine 258, cysteine 261, cysteine 267, cysteine 270, histidine 280, and histidine 284. Position 394 is a phosphoserine (serine 394). The tract at residues 399 to 448 (DEEHRLIARYAARLAAEAGNMTRPPTDASFNFDANKQQRQLIAELENKNR) is syntrophin-binding region. Threonine 424 bears the Phosphothreonine mark. Residues 429–519 (NFDANKQQRQ…LEGLMKLLKA (91 aa)) adopt a coiled-coil conformation. The tract at residues 520-562 (QATGSPHTSPTHGGGRSMPMPVRSTSAGSTPTHGPQDSLSGVG) is disordered. Polar residues-rich tracts occupy residues 521 to 530 (ATGSPHTSPT) and 542 to 558 (RSTS…QDSL).

This sequence belongs to the dystrophin family. Dystrobrevin subfamily. In terms of assembly, interacts with dystrophin short form DP71 and syntrophins SNTG1 and SNTG2. Binds DTNBP1. Forms a specific complex composed of DMD, SNTB2 and SNTA1 in neuron; the interaction with SNTB2 and SNTA1 is DMD independent. Interacts with UTRN and dystrophin short form DP71 in the kidney and liver. Interacts with SNTB1, SNTB2 and SNTA1 in kidney and liver. Interacts with KIF5A. Interacts with HMG20A and HMG20B. Interacts with OLFM1. Interacts with PRKAR2B and PRKAR1A. Phosphorylated by PKA. Phosphorylation at Thr-11 alters the interaction with KIF5A. In terms of tissue distribution, expressed in neurons. In the isocortex, expressed most prominently in the somata (including the nuclei) and the dendrites of the pyramidal cells. Expressed in the hippocampus CA1, CA2, and CA3 neurons, namely in the initial segments of dendrites. Expressed in the Purkinje cells, molecular layer interneurons, and granule cells of cerebellum. Expressed in axon fascicles associated with the spinal trigeminal tract and in the internal capsule in the brainstem.

Its subcellular location is the cytoplasm. The protein localises to the postsynaptic density. It localises to the cell projection. The protein resides in the dendrite. It is found in the basal cell membrane. Its subcellular location is the postsynapse. The protein localises to the nucleus. Scaffolding protein that assembles DMD and SNTA1 molecules to the basal membrane of kidney cells and liver sinusoids. May function as a repressor of the SYN1 promoter through the binding of repressor element-1 (RE-1), in turn regulates SYN1 expression and may be involved in cell proliferation regulation during the early phase of neural differentiation. May be required for proper maturation and function of a subset of inhibitory synapses. The polypeptide is Dystrobrevin beta (Rattus norvegicus (Rat)).